A 118-amino-acid polypeptide reads, in one-letter code: Putative pterin-4-alpha-carbinolamine dehydratase (118 aa).

Belongs to the pterin-4-alpha-carbinolamine dehydratase family.

The enzyme catalyses (4aS,6R)-4a-hydroxy-L-erythro-5,6,7,8-tetrahydrobiopterin = (6R)-L-erythro-6,7-dihydrobiopterin + H2O. In Pseudomonas paraeruginosa (strain DSM 24068 / PA7) (Pseudomonas aeruginosa (strain PA7)), this protein is Putative pterin-4-alpha-carbinolamine dehydratase.